The chain runs to 298 residues: N-acetylmuramic acid 6-phosphate etherase (298 aa).

An SIS domain is found at I57 to K220. Residue E85 is the Proton donor of the active site. The active site involves E116.

It belongs to the GCKR-like family. MurNAc-6-P etherase subfamily. Homodimer.

It catalyses the reaction N-acetyl-D-muramate 6-phosphate + H2O = N-acetyl-D-glucosamine 6-phosphate + (R)-lactate. It functions in the pathway amino-sugar metabolism; 1,6-anhydro-N-acetylmuramate degradation. The protein operates within amino-sugar metabolism; N-acetylmuramate degradation. It participates in cell wall biogenesis; peptidoglycan recycling. Functionally, specifically catalyzes the cleavage of the D-lactyl ether substituent of MurNAc 6-phosphate, producing GlcNAc 6-phosphate and D-lactate. Together with AnmK, is also required for the utilization of anhydro-N-acetylmuramic acid (anhMurNAc) either imported from the medium or derived from its own cell wall murein, and thus plays a role in cell wall recycling. The polypeptide is N-acetylmuramic acid 6-phosphate etherase (Aeromonas hydrophila subsp. hydrophila (strain ATCC 7966 / DSM 30187 / BCRC 13018 / CCUG 14551 / JCM 1027 / KCTC 2358 / NCIMB 9240 / NCTC 8049)).